The sequence spans 602 residues: Elongation factor 4 (602 aa).

Residues 6–188 form the tr-type G domain; sequence DRIRNFCIIA…RIVTRIPPPG (183 aa). GTP is bound by residues 18 to 23 and 135 to 138; these read DHGKST and NKID.

It belongs to the TRAFAC class translation factor GTPase superfamily. Classic translation factor GTPase family. LepA subfamily.

Its subcellular location is the cell membrane. It catalyses the reaction GTP + H2O = GDP + phosphate + H(+). Required for accurate and efficient protein synthesis under certain stress conditions. May act as a fidelity factor of the translation reaction, by catalyzing a one-codon backward translocation of tRNAs on improperly translocated ribosomes. Back-translocation proceeds from a post-translocation (POST) complex to a pre-translocation (PRE) complex, thus giving elongation factor G a second chance to translocate the tRNAs correctly. Binds to ribosomes in a GTP-dependent manner. This Pelotomaculum thermopropionicum (strain DSM 13744 / JCM 10971 / SI) protein is Elongation factor 4.